We begin with the raw amino-acid sequence, 726 residues long: Probable dipeptidyl-peptidase 5 (726 aa).

An N-terminal signal peptide occupies residues 1–19 (MGALQWLSITAAAASAVSA). N-linked (GlcNAc...) asparagine glycans are attached at residues Asn97, Asn153, Asn259, Asn398, Asn453, and Asn529. Ser564 acts as the Charge relay system in catalysis. Residue Asn611 is glycosylated (N-linked (GlcNAc...) asparagine). Catalysis depends on charge relay system residues Asp647 and His679.

Belongs to the peptidase S9C family.

The protein localises to the secreted. Extracellular dipeptidyl-peptidase which removes N-terminal dipeptides sequentially from polypeptides having unsubstituted N-termini. In Aspergillus niger, this protein is Probable dipeptidyl-peptidase 5 (dpp5).